A 52-amino-acid chain; its full sequence is Large ribosomal subunit protein bL33 (52 aa).

This sequence belongs to the bacterial ribosomal protein bL33 family.

The protein is Large ribosomal subunit protein bL33 of Campylobacter jejuni subsp. jejuni serotype O:6 (strain 81116 / NCTC 11828).